A 101-amino-acid chain; its full sequence is YcgL domain-containing protein ACIAD2309 (101 aa).

The 93-residue stretch at 1 to 93 folds into the YcgL domain; it reads MHCDIYRSSK…PPEGFINPSD (93 aa).

The sequence is that of YcgL domain-containing protein ACIAD2309 from Acinetobacter baylyi (strain ATCC 33305 / BD413 / ADP1).